Here is a 135-residue protein sequence, read N- to C-terminus: Peptide methionine sulfoxide reductase MsrB (135 aa).

The 123-residue stretch at 9–131 (DDYWRSKLTD…NSASIQFEEE (123 aa)) folds into the MsrB domain. 4 residues coordinate Zn(2+): Cys48, Cys51, Cys97, and Cys100. Cys120 acts as the Nucleophile in catalysis.

This sequence belongs to the MsrB Met sulfoxide reductase family. It depends on Zn(2+) as a cofactor.

The enzyme catalyses L-methionyl-[protein] + [thioredoxin]-disulfide + H2O = L-methionyl-(R)-S-oxide-[protein] + [thioredoxin]-dithiol. This Teredinibacter turnerae (strain ATCC 39867 / T7901) protein is Peptide methionine sulfoxide reductase MsrB.